Here is a 696-residue protein sequence, read N- to C-terminus: Putative zinc metalloproteinase YIL108W (696 aa).

Residue lysine 245 forms a Glycyl lysine isopeptide (Lys-Gly) (interchain with G-Cter in ubiquitin) linkage. Histidine 318 is a Zn(2+) binding site. Glutamate 319 is a catalytic residue. Residues histidine 322 and histidine 328 each coordinate Zn(2+). The residue at position 361 (serine 361) is a Phosphoserine. Residues lysine 478, lysine 518, lysine 579, lysine 590, and lysine 596 each participate in a glycyl lysine isopeptide (Lys-Gly) (interchain with G-Cter in ubiquitin) cross-link. One can recognise a Jacalin-type lectin domain in the interval 522–695 (GIKSPLYGRS…VDAFGIIYGA (174 aa)).

The protein belongs to the peptidase M10B family. Zn(2+) is required as a cofactor.

Its subcellular location is the cytoplasm. This chain is Putative zinc metalloproteinase YIL108W, found in Saccharomyces cerevisiae (strain ATCC 204508 / S288c) (Baker's yeast).